A 185-amino-acid polypeptide reads, in one-letter code: Elongation factor P (185 aa).

The protein belongs to the elongation factor P family.

It localises to the cytoplasm. It participates in protein biosynthesis; polypeptide chain elongation. In terms of biological role, involved in peptide bond synthesis. Stimulates efficient translation and peptide-bond synthesis on native or reconstituted 70S ribosomes in vitro. Probably functions indirectly by altering the affinity of the ribosome for aminoacyl-tRNA, thus increasing their reactivity as acceptors for peptidyl transferase. The polypeptide is Elongation factor P (Lactococcus lactis subsp. cremoris (strain MG1363)).